An 874-amino-acid chain; its full sequence is Alanine--tRNA ligase (874 aa).

Residues His-562, His-566, Cys-665, and His-669 each coordinate Zn(2+).

The protein belongs to the class-II aminoacyl-tRNA synthetase family. The cofactor is Zn(2+).

Its subcellular location is the cytoplasm. The catalysed reaction is tRNA(Ala) + L-alanine + ATP = L-alanyl-tRNA(Ala) + AMP + diphosphate. In terms of biological role, catalyzes the attachment of alanine to tRNA(Ala) in a two-step reaction: alanine is first activated by ATP to form Ala-AMP and then transferred to the acceptor end of tRNA(Ala). Also edits incorrectly charged Ser-tRNA(Ala) and Gly-tRNA(Ala) via its editing domain. The protein is Alanine--tRNA ligase of Pseudomonas syringae pv. tomato (strain ATCC BAA-871 / DC3000).